A 274-amino-acid chain; its full sequence is 2,3,4,5-tetrahydropyridine-2,6-dicarboxylate N-succinyltransferase (274 aa).

Arg-107 and Asp-144 together coordinate substrate.

Belongs to the transferase hexapeptide repeat family. In terms of assembly, homotrimer.

It localises to the cytoplasm. It catalyses the reaction (S)-2,3,4,5-tetrahydrodipicolinate + succinyl-CoA + H2O = (S)-2-succinylamino-6-oxoheptanedioate + CoA. It functions in the pathway amino-acid biosynthesis; L-lysine biosynthesis via DAP pathway; LL-2,6-diaminopimelate from (S)-tetrahydrodipicolinate (succinylase route): step 1/3. The sequence is that of 2,3,4,5-tetrahydropyridine-2,6-dicarboxylate N-succinyltransferase from Cereibacter sphaeroides (strain ATCC 17029 / ATH 2.4.9) (Rhodobacter sphaeroides).